A 637-amino-acid chain; its full sequence is DNA primase (637 aa).

A CHC2-type zinc finger spans residues 39–63; the sequence is CPFHGEKTPSFNVNAEKGFYHCFGC. Residues 257–338 form the Toprim domain; it reads HEVYLMEGFM…QIVKVPEGLD (82 aa). 3 residues coordinate Mg(2+): Glu263, Asp307, and Asp309.

This sequence belongs to the DnaG primase family. As to quaternary structure, monomer. Interacts with DnaB. It depends on Zn(2+) as a cofactor. Mg(2+) is required as a cofactor.

The enzyme catalyses ssDNA + n NTP = ssDNA/pppN(pN)n-1 hybrid + (n-1) diphosphate.. RNA polymerase that catalyzes the synthesis of short RNA molecules used as primers for DNA polymerase during DNA replication. In Lactococcus lactis subsp. lactis (strain IL1403) (Streptococcus lactis), this protein is DNA primase.